A 107-amino-acid chain; its full sequence is Ig kappa chain V-VI region TEPC 601/TEPC 191 (107 aa).

Positions Glu1 to Cys23 are framework-1. Cys23 and Cys87 form a disulfide bridge. The interval Ser24–His33 is complementarity-determining-1. The interval Trp34–Tyr48 is framework-2. Residues Glu49–Ser55 form a complementarity-determining-2 region. Residues Gly56–Cys87 are framework-3. The complementarity-determining-3 stretch occupies residues Gln88–Thr96. The framework-4 stretch occupies residues Phe97–Lys106.

The sequence is that of Ig kappa chain V-VI region TEPC 601/TEPC 191 from Mus musculus (Mouse).